A 196-amino-acid polypeptide reads, in one-letter code: Agamous-like MADS-box protein AGL31 (196 aa).

One can recognise an MADS-box domain in the interval 1 to 61 (MGRKKVEIKR…GKLYKSASGD (61 aa)). One can recognise a K-box domain in the interval 80 to 170 (ALDLAEKTRN…ASQVGKKTFL (91 aa)).

In terms of tissue distribution, expressed in most plant tissues, roots, seedlings, leaves, stems, inflorescences, pollen, siliques and flowers.

The protein localises to the nucleus. Probable transcription factor that prevents vernalization by short periods of cold. Acts as a floral repressor. In Arabidopsis thaliana (Mouse-ear cress), this protein is Agamous-like MADS-box protein AGL31 (AGL31).